A 723-amino-acid chain; its full sequence is Nicastrin (723 aa).

An N-terminal signal peptide occupies residues 1–16 (MKKWLVIVLIIAGIRC). Residues 17-678 (DGFSDQVFRT…ESVNLYLMED (662 aa)) lie on the Extracellular side of the membrane. N-linked (GlcNAc...) asparagine glycosylation is found at Asn-40, Asn-181, Asn-271, Asn-328, Asn-409, and Asn-627. Residues 679-699 (ASFEYTMILIAVISALLSIFA) form a helical membrane-spanning segment. Over 700–723 (VGRCSETTFIVDEGEPAAEGGEPL) the chain is Cytoplasmic.

This sequence belongs to the nicastrin family. In terms of assembly, component of the gamma-secretase complex, a complex probably composed of the presenilin homodimer (sel-12, hop-1 or spe-4), nicastrin (aph-2), aph-1 and pen-2.

The protein localises to the membrane. Functionally, essential subunit of the gamma-secretase complex, an endoprotease complex that catalyzes the intramembrane cleavage of integral membrane proteins such as Notch (glp-1 or lin-12). It may represents a stabilizing cofactor required for the assembly of the gamma-secretase complex. This Caenorhabditis elegans protein is Nicastrin (aph-2).